The primary structure comprises 520 residues: MAALRLLAWALPRGVSALRPPPALPHRLIRRYVSDRSGSVHFYTDPVKAVEGVKDGSTVMLGGFGLCGIPENLIGALKTKGVKDLKIVSSNVGVDDFGLGILLASKQVRRVVCSYLGENALCEKLYLAGELELEMTPQGTLAERIRAGGTGVPAFYTPTGYGTLVQEGGSPIRYAPDGHLITLSEPREVREFQGRFYLLEHAIRADFALIKGWKADRSGNVIFRGSARNFNVPMCKAADISVVEVEEIVDVGTFAPEDIHVPNIYVDRVIKGPKFEKRIERLTTRDSKPAPGSKDNDPSRTRIIKRAALEFQDGMYANLGIGIPVLASNYISPKMTVYLHSENGILGLGPFPLKNEVDADVINAGKQTVTVVPGGCFFASDDSFAMIRGGHLQLTMLGAMQVSQYGDLANWMVPGKKVKGMGGAMDLVSSKKTRVVVTMEHCTKTKQPKILKKCTMPLTGKRCVDLIITEKAVFEVNHSKGLTLVELWEGSSVDDIKATTACSFAVSPNLKPMQQIKLDA.

A mitochondrion-targeting transit peptide spans 1-39; sequence MAALRLLAWALPRGVSALRPPPALPHRLIRRYVSDRSGS. Residues 280–299 form a disordered region; the sequence is ERLTTRDSKPAPGSKDNDPS. Catalysis depends on Glu-342, which acts as the 5-glutamyl coenzyme A thioester intermediate.

This sequence belongs to the 3-oxoacid CoA-transferase family. As to quaternary structure, homodimer.

The protein localises to the mitochondrion. It catalyses the reaction a 3-oxo acid + succinyl-CoA = a 3-oxoacyl-CoA + succinate. The protein operates within ketone metabolism; succinyl-CoA degradation; acetoacetyl-CoA from succinyl-CoA: step 1/1. Key enzyme for ketone body catabolism. Transfers the CoA moiety from succinate to acetoacetate. Formation of the enzyme-CoA intermediate proceeds via an unstable anhydride species formed between the carboxylate groups of the enzyme and substrate. Probably play and important roles in the energy metabolism of spermatozoa. The sequence is that of Succinyl-CoA:3-ketoacid coenzyme A transferase 2A, mitochondrial (Oxct2a) from Mus musculus (Mouse).